The sequence spans 703 residues: Probable ATP-dependent RNA helicase vasa-like (703 aa).

Disordered regions lie at residues 1–22, 35–73, and 88–167; these read MSDDWDETDAAPASDWNIESFG, NTGNAFNDGEGGFDEGSQSNFDDPFRSGGGGFGGRGRGG, and RDCP…RGCF. Residues 61–73 are compositionally biased toward gly residues; that stretch reads SGGGGFGGRGRGG. The segment at 77 to 92 adopts a CCHC-type 1 zinc-finger fold; it reads CFKCGDEGHMARDCPS. A compositionally biased stretch (gly residues) spans 146–155; the sequence is FGFGSGSGSR. 2 CCHC-type zinc fingers span residues 166–181 and 189–204; these read CFKCGEEGHMSRDCPS and CFKCGQEGHNARDCPN. Residues 261-289 carry the Q motif motif; the sequence is ESFQSMNLRPLLLENIVKAGYGCPTPVQK. One can recognise a Helicase ATP-binding domain in the interval 292-475; the sequence is IPNVMNGRDI…SAFLNNYLFV (184 aa). Residue 305–312 coordinates ATP; that stretch reads AQTGSGKT. Positions 419–422 match the DEAD box motif; sequence DEAD. One can recognise a Helicase C-terminal domain in the interval 506-651; it reads MCEEILISAD…TIPDWLTQKA (146 aa). Residues 676–703 form a disordered region; it reads GGGRGWEKNQASSFLGGPSESNVDEEWD.

This sequence belongs to the DEAD box helicase family. DDX4/VASA subfamily. In terms of tissue distribution, expressed in ovaries and testis. Not expressed in somatic tissue of the ovaries including follicle cells, muscle and connective tissue.

The protein localises to the cytoplasm. Its subcellular location is the nucleus. It is found in the nucleolus. It carries out the reaction ATP + H2O = ADP + phosphate + H(+). Involved in translational control mechanisms operating in early stages of oogenesis. Required maternally in many stages of oogenesis, including cystocyte differentiation, oocyte differentiation, and specification of anterior-posterior polarity in the developing cysts. Essential for the formation and/or structural integrity of perinuclear nuage particles during germ cell formation. The protein is Probable ATP-dependent RNA helicase vasa-like of Penaeus vannamei (Whiteleg shrimp).